We begin with the raw amino-acid sequence, 291 residues long: 11-beta-hydroxysteroid dehydrogenase 1 (291 aa).

Residues 1 to 7 (MAFMKTH) are Cytoplasmic-facing. The chain crosses the membrane as a helical; Signal-anchor for type II membrane protein span at residues 8–24 (LLPILGLFMAYYYYSAY). At 25 to 291 (EEFRPEMLQG…TSYSTDGLIN (267 aa)) the chain is on the lumenal side. NADP(+) contacts are provided by residues 41-67 (GASKGIGREMAYHLAKMGAHVVVTARS), 92-93 (TM), and 119-121 (NHI). N-linked (GlcNAc...) asparagine glycosylation is found at Asn123 and Asn162. Residue Ser170 participates in substrate binding. The active-site Proton acceptor is the Tyr183. 183-187 (YSASK) serves as a coordination point for NADP(+). Asn207 is a glycosylation site (N-linked (GlcNAc...) asparagine). An NADP(+)-binding site is contributed by 218–222 (IDTDT).

Belongs to the short-chain dehydrogenases/reductases (SDR) family. Homodimer. In terms of tissue distribution, abundantly expressed in the liver, followed by fibroblasts, also detected in the brain, lung, heart, and ovary, and in smaller amounts in kidney, skin, and spleen.

It is found in the endoplasmic reticulum membrane. The catalysed reaction is an 11beta-hydroxysteroid + NADP(+) = an 11-oxosteroid + NADPH + H(+). It carries out the reaction cortisone + NADPH + H(+) = cortisol + NADP(+). It catalyses the reaction corticosterone + NADP(+) = 11-dehydrocorticosterone + NADPH + H(+). The enzyme catalyses a 7beta-hydroxysteroid + NADP(+) = a 7-oxosteroid + NADPH + H(+). The catalysed reaction is 7-oxocholesterol + NADPH + H(+) = 7beta-hydroxycholesterol + NADP(+). It carries out the reaction chenodeoxycholate + NADP(+) = 7-oxolithocholate + NADPH + H(+). It catalyses the reaction 7-oxolithocholate + NADPH + H(+) = ursodeoxycholate + NADP(+). The enzyme catalyses glycochenodeoxycholate + NADP(+) = 7-oxoglycolithocholate + NADPH + H(+). The catalysed reaction is taurochenodeoxycholate + NADP(+) = 7-oxotaurolithocholate + NADPH + H(+). It carries out the reaction tauroursodeoxycholate + NADP(+) = 7-oxotaurolithocholate + NADPH + H(+). It catalyses the reaction glycoursodeoxycholate + NADP(+) = 7-oxoglycolithocholate + NADPH + H(+). The enzyme catalyses 7-oxopregnenolone + NADPH + H(+) = 7beta-hydroxypregnenolone + NADP(+). The catalysed reaction is 3beta,7alpha-dihydroxyandrost-5-en-17-one + NADP(+) = 3beta-hydroxy-5-androstene-7,17-dione + NADPH + H(+). It carries out the reaction 3beta-hydroxy-5-androstene-7,17-dione + NADPH + H(+) = 3beta,7beta-dihydroxyandrost-5-en-17-one + NADP(+). It catalyses the reaction 3beta-hydroxy-5alpha-androstane-7,17-dione + NADPH + H(+) = 3beta,7beta-dihydroxy-5alpha-androstan-17-one + NADP(+). It functions in the pathway steroid metabolism. Functionally, controls the reversible conversion of biologically active glucocorticoids such as cortisone to cortisol, and 11-dehydrocorticosterone to corticosterone in the presence of NADP(H). Participates in the corticosteroid receptor-mediated anti-inflammatory response, as well as metabolic and homeostatic processes. Bidirectional in vitro, predominantly functions as a reductase in vivo, thereby increasing the concentration of active glucocorticoids. It has broad substrate specificity, besides glucocorticoids, it accepts other steroid and sterol substrates. Interconverts 7-oxo- and 7-hydroxy-neurosteroids such as 7-oxopregnenolone and 7beta-hydroxypregnenolone, 7-oxodehydroepiandrosterone (3beta-hydroxy-5-androstene-7,17-dione) and 7beta-hydroxydehydroepiandrosterone (3beta,7beta-dihydroxyandrost-5-en-17-one), among others. Catalyzes the stereo-specific conversion of the major dietary oxysterol, 7-ketocholesterol (7-oxocholesterol), into the more polar 7-beta-hydroxycholesterol metabolite. 7-oxocholesterol is one of the most important oxysterols, it participates in several events such as induction of apoptosis, accumulation in atherosclerotic lesions, lipid peroxidation, and induction of foam cell formation. Mediates the 7-oxo reduction of 7-oxolithocholate mainly to chenodeoxycholate, and to a lesser extent to ursodeoxycholate, both in its free form and when conjugated to glycine or taurine, providing a link between glucocorticoid activation and bile acid metabolism. Catalyzes the synthesis of 7-beta-25-dihydroxycholesterol from 7-oxo-25-hydroxycholesterol in vitro, which acts as a ligand for the G-protein-coupled receptor (GPCR) Epstein-Barr virus-induced gene 2 (EBI2) and may thereby regulate immune cell migration. The sequence is that of 11-beta-hydroxysteroid dehydrogenase 1 (HSD11B1) from Saimiri sciureus (Common squirrel monkey).